The primary structure comprises 438 residues: Dol-P-Man:Man(5)GlcNAc(2)-PP-Dol alpha-1,3-mannosyltransferase (438 aa).

Ser-13 carries the post-translational modification Phosphoserine. The next 11 helical transmembrane spans lie at Tyr-41–Ile-61, Thr-95–Thr-115, Met-123–Tyr-143, Val-149–Val-169, Leu-172–Gln-192, Leu-203–Leu-223, Ala-231–Leu-251, Phe-289–Trp-309, Pro-332–Phe-352, Leu-356–Pro-376, and Ala-407–Phe-427.

Belongs to the glycosyltransferase ALG3 family.

It localises to the endoplasmic reticulum membrane. It catalyses the reaction an alpha-D-Man-(1-&gt;2)-alpha-D-Man-(1-&gt;2)-alpha-D-Man-(1-&gt;3)-[alpha-D-Man-(1-&gt;6)]-beta-D-Man-(1-&gt;4)-beta-D-GlcNAc-(1-&gt;4)-alpha-D-GlcNAc-diphospho-di-trans,poly-cis-dolichol + a di-trans,poly-cis-dolichyl beta-D-mannosyl phosphate = an alpha-D-Man-(1-&gt;2)-alpha-D-Man-(1-&gt;2)-alpha-D-Man-(1-&gt;3)-[alpha-D-Man-(1-&gt;3)-alpha-D-Man-(1-&gt;6)]-beta-D-Man-(1-&gt;4)-beta-D-GlcNAc-(1-&gt;4)-alpha-D-GlcNAc-diphospho-di-trans,poly-cis-dolichol + a di-trans,poly-cis-dolichyl phosphate + H(+). It functions in the pathway protein modification; protein glycosylation. Dol-P-Man:Man(5)GlcNAc(2)-PP-Dol alpha-1,3-mannosyltransferase that operates in the biosynthetic pathway of dolichol-linked oligosaccharides, the glycan precursors employed in protein asparagine (N)-glycosylation. The assembly of dolichol-linked oligosaccharides begins on the cytosolic side of the endoplasmic reticulum membrane and finishes in its lumen. The sequential addition of sugars to dolichol pyrophosphate produces dolichol-linked oligosaccharides containing fourteen sugars, including two GlcNAcs, nine mannoses and three glucoses. Once assembled, the oligosaccharide is transferred from the lipid to nascent proteins by oligosaccharyltransferases. In the lumen of the endoplasmic reticulum, adds the first dolichyl beta-D-mannosyl phosphate derived mannose in an alpha-1,3 linkage to Man(5)GlcNAc(2)-PP-dolichol to produce Man(6)GlcNAc(2)-PP-dolichol. Man(6)GlcNAc(2)-PP-dolichol is a substrate for ALG9, the following enzyme in the biosynthetic pathway. This Homo sapiens (Human) protein is Dol-P-Man:Man(5)GlcNAc(2)-PP-Dol alpha-1,3-mannosyltransferase.